The sequence spans 371 residues: uncharacterized protein (371 aa).

Residues 339–371 (KVTHEDLVKNRPRSPVRPPIPATAKTPDLPERH) are disordered.

This is an uncharacterized protein from Escherichia coli (strain K12).